A 426-amino-acid chain; its full sequence is Glutamate-1-semialdehyde 2,1-aminomutase (426 aa).

Lys-265 is modified (N6-(pyridoxal phosphate)lysine).

This sequence belongs to the class-III pyridoxal-phosphate-dependent aminotransferase family. HemL subfamily. In terms of assembly, homodimer. Requires pyridoxal 5'-phosphate as cofactor.

The protein resides in the cytoplasm. The catalysed reaction is (S)-4-amino-5-oxopentanoate = 5-aminolevulinate. Its pathway is porphyrin-containing compound metabolism; protoporphyrin-IX biosynthesis; 5-aminolevulinate from L-glutamyl-tRNA(Glu): step 2/2. This is Glutamate-1-semialdehyde 2,1-aminomutase from Erwinia tasmaniensis (strain DSM 17950 / CFBP 7177 / CIP 109463 / NCPPB 4357 / Et1/99).